Consider the following 110-residue polypeptide: UPF0122 protein YlxM (110 aa).

It belongs to the UPF0122 family.

Functionally, might take part in the signal recognition particle (SRP) pathway. This is inferred from the conservation of its genetic proximity to ftsY/ffh. May be a regulatory protein. In Bacillus subtilis (strain 168), this protein is UPF0122 protein YlxM (ylxM).